A 236-amino-acid chain; its full sequence is Carboxymethylenebutenolidase (236 aa).

Active-site residues include cysteine 123, aspartate 171, and histidine 202.

It belongs to the dienelactone hydrolase family. Monomer.

It carries out the reaction 2-(5-oxo-2,5-dihydrofuran-2-ylidene)acetate + H2O = 4-oxohex-2-enedioate + H(+). It participates in aromatic compound metabolism; 3-chlorocatechol degradation. In terms of biological role, ring cleavage of cyclic ester dienelactone to produce maleylacetate. The protein is Carboxymethylenebutenolidase (clcD) of Pseudomonas knackmussii (strain DSM 6978 / CCUG 54928 / LMG 23759 / B13).